The sequence spans 135 residues: MATFHFDLVSPEKIAFSGEVDQVDVPGQEGDFGVLAGHAPFVATLRPGILTVTAGGTQQKIIVLGGLAEISEKGLTILADVATSLKELDQTAFAAEISGMEAKLNEKQGNELDRAIERLDHFKTIQQQLNTTALH.

It belongs to the ATPase epsilon chain family. F-type ATPases have 2 components, CF(1) - the catalytic core - and CF(0) - the membrane proton channel. CF(1) has five subunits: alpha(3), beta(3), gamma(1), delta(1), epsilon(1). CF(0) has three main subunits: a, b and c.

It localises to the cell inner membrane. Produces ATP from ADP in the presence of a proton gradient across the membrane. In Bradyrhizobium sp. (strain BTAi1 / ATCC BAA-1182), this protein is ATP synthase epsilon chain.